We begin with the raw amino-acid sequence, 369 residues long: uncharacterized protein (369 aa).

This is an uncharacterized protein from Haloarcula marismortui (strain ATCC 43049 / DSM 3752 / JCM 8966 / VKM B-1809) (Halobacterium marismortui).